Consider the following 402-residue polypeptide: tRNA pseudouridine synthase Pus10 (402 aa).

The THUMP domain occupies 37–159 (RLRGERLVEK…QIRVHVQINP (123 aa)). D228 serves as the catalytic Nucleophile. Y296 and Y364 together coordinate substrate.

It belongs to the pseudouridine synthase Pus10 family.

It carries out the reaction uridine(54) in tRNA = pseudouridine(54) in tRNA. The catalysed reaction is uridine(55) in tRNA = pseudouridine(55) in tRNA. Its function is as follows. Responsible for synthesis of pseudouridine from uracil-54 and uracil-55 in the psi GC loop of transfer RNAs. The sequence is that of tRNA pseudouridine synthase Pus10 from Methanothermobacter marburgensis (strain ATCC BAA-927 / DSM 2133 / JCM 14651 / NBRC 100331 / OCM 82 / Marburg) (Methanobacterium thermoautotrophicum).